The sequence spans 540 residues: Chaperonin GroEL (540 aa).

ATP contacts are provided by residues 29–32, 86–90, Gly413, and Asp495; these read TLGP and DGTTT.

Belongs to the chaperonin (HSP60) family. In terms of assembly, forms a cylinder of 14 subunits composed of two heptameric rings stacked back-to-back. Interacts with the co-chaperonin GroES.

The protein resides in the cytoplasm. The enzyme catalyses ATP + H2O + a folded polypeptide = ADP + phosphate + an unfolded polypeptide.. Together with its co-chaperonin GroES, plays an essential role in assisting protein folding. The GroEL-GroES system forms a nano-cage that allows encapsulation of the non-native substrate proteins and provides a physical environment optimized to promote and accelerate protein folding. In Caldanaerobacter subterraneus subsp. tengcongensis (strain DSM 15242 / JCM 11007 / NBRC 100824 / MB4) (Thermoanaerobacter tengcongensis), this protein is Chaperonin GroEL.